Consider the following 63-residue polypeptide: 2-hydroxymuconate tautomerase (63 aa).

Proline 2 acts as the Proton acceptor; via imino nitrogen in catalysis.

The protein belongs to the 4-oxalocrotonate tautomerase family. In terms of assembly, homohexamer.

The enzyme catalyses (2Z,4E)-2-hydroxyhexa-2,4-dienedioate = (3E)-2-oxohex-3-enedioate. It functions in the pathway xenobiotic degradation; toluene degradation. The protein operates within xenobiotic degradation; xylene degradation. Its function is as follows. Catalyzes the ketonization of 2-hydroxymuconate stereoselectively to yield 2-oxo-3-hexenedioate. This is 2-hydroxymuconate tautomerase (xylH) from Pseudomonas putida (Arthrobacter siderocapsulatus).